Here is a 314-residue protein sequence, read N- to C-terminus: Carbamate kinase (314 aa).

This sequence belongs to the carbamate kinase family. As to quaternary structure, homodimer.

The catalysed reaction is hydrogencarbonate + NH4(+) + ATP = carbamoyl phosphate + ADP + H2O + H(+). It functions in the pathway metabolic intermediate metabolism; carbamoyl phosphate degradation; CO(2) and NH(3) from carbamoyl phosphate: step 1/1. This is Carbamate kinase (CBK) from Trichomonas vaginalis.